The following is a 347-amino-acid chain: D-alanine--D-alanine ligase (347 aa).

Residues 131-333 form the ATP-grasp domain; sequence KRVLESAGIA…YPELIERLVD (203 aa). Residue 161-216 participates in ATP binding; that stretch reads EEKLAYPVFTKPSNMGSSVGISKSENQEELRQALELAFRYDSRVLVEQGVNAREIE. Mg(2+)-binding residues include Asp287, Glu300, and Asn302.

It belongs to the D-alanine--D-alanine ligase family. The cofactor is Mg(2+). Mn(2+) is required as a cofactor.

Its subcellular location is the cytoplasm. The catalysed reaction is 2 D-alanine + ATP = D-alanyl-D-alanine + ADP + phosphate + H(+). It functions in the pathway cell wall biogenesis; peptidoglycan biosynthesis. Cell wall formation. In Streptococcus pneumoniae (strain CGSP14), this protein is D-alanine--D-alanine ligase.